The primary structure comprises 268 residues: Undecaprenyl-diphosphatase (268 aa).

Helical transmembrane passes span 11–33, 46–66, 84–104, 107–127, 144–164, 185–205, 213–233, and 246–266; these read FLGL…LLLI, FEVL…SAKL, LGVL…HGFI, VLFE…FILL, YPLP…IPGV, AEFS…YDLF, FNDG…GVFV, and FALF…ALII.

The protein belongs to the UppP family.

The protein resides in the cell inner membrane. It catalyses the reaction di-trans,octa-cis-undecaprenyl diphosphate + H2O = di-trans,octa-cis-undecaprenyl phosphate + phosphate + H(+). In terms of biological role, catalyzes the dephosphorylation of undecaprenyl diphosphate (UPP). Confers resistance to bacitracin. The chain is Undecaprenyl-diphosphatase from Brucella suis (strain ATCC 23445 / NCTC 10510).